Reading from the N-terminus, the 434-residue chain is Bcl-2-like protein 13 (434 aa).

The BH4 motif lies at 14–30; it reads ETKYVVLSYLGLLSQEK. Residue Ser35 is modified to Phosphoserine. The short motif at 97-113 is the BH3 element; that stretch reads IEDCLAHLGERVSQDLK. A BH1 motif is present at residues 144–154; it reads ASGWNKLLVPL. Positions 190-203 match the BH2 motif; that stretch reads FIIQQGGWGSVFSL. The segment at 224-245 is disordered; it reads LPSDNSGQVSPPESPTVTTSWQ. Positions 226–245 are enriched in polar residues; that stretch reads SDNSGQVSPPESPTVTTSWQ. The stretch at 243-253 is one A repeat; it reads SWQSESLPVSL. Phosphoserine is present on residues Ser256, Ser258, Ser300, Ser343, Ser347, Ser377, and Ser387. The stretch at 258-268 is one A; approximate repeat; sequence SWHTESLPVSL. The interval 282–303 is disordered; it reads EVKSLDSSGAGEKSENNSSNSD. The segment at 363–398 is disordered; that stretch reads RPEAVERAEGAAQLSEERAGSRKKSHTGEAAAVRGA. Positions 365-382 are enriched in basic and acidic residues; that stretch reads EAVERAEGAAQLSEERAG. The chain crosses the membrane as a helical span at residues 409–429; it reads VLLFGGAAAVAILAVAVGVAL.

Belongs to the Bcl-2 family. In terms of assembly, monomer.

The protein resides in the mitochondrion membrane. Functionally, may promote the activation of caspase-3 and apoptosis. This Mus musculus (Mouse) protein is Bcl-2-like protein 13 (Bcl2l13).